The chain runs to 80 residues: Anaphase-promoting complex subunit hcn1 (80 aa).

Met1 is modified (N-acetylmethionine). The tract at residues 26–54 (QTLDSESTTEEALQKNEESTRLSPEKKKI) is disordered. Residues 37 to 54 (ALQKNEESTRLSPEKKKI) show a composition bias toward basic and acidic residues.

The APC/C is composed of at least 13 subunits: apc1, apc2, nuc2, apc4, apc5, cut9, apc8, apc10, apc11, hcn1, apc13, apc14 and apc15. Interacts directly (via N-terminus) with cut9.

Functionally, component of the anaphase promoting complex/cyclosome (APC/C), a cell cycle-regulated E3 ubiquitin-protein ligase complex that controls progression through mitosis and the G1 phase of the cell cycle. The APC/C is thought to confer substrate specificity and, in the presence of ubiquitin-conjugating E2 enzymes, it catalyzes the formation of protein-ubiquitin conjugates that are subsequently degraded by the 26S proteasome. Has a role in assembling cut9 in the 20S APC/cyclosome. The polypeptide is Anaphase-promoting complex subunit hcn1 (hcn1) (Schizosaccharomyces pombe (strain 972 / ATCC 24843) (Fission yeast)).